Reading from the N-terminus, the 513-residue chain is GMP synthase [glutamine-hydrolyzing] (513 aa).

A Glutamine amidotransferase type-1 domain is found at 7 to 197 (TILVLDFGGQ…LFGVCGCTGE (191 aa)). The active-site Nucleophile is Cys-84. Active-site residues include His-171 and Glu-173. Positions 198–387 (WTMENFIEEQ…LGLPEDIVWR (190 aa)) constitute a GMPS ATP-PPase domain. 225-231 (SGGVDSS) is an ATP binding site.

Homodimer.

It carries out the reaction XMP + L-glutamine + ATP + H2O = GMP + L-glutamate + AMP + diphosphate + 2 H(+). It participates in purine metabolism; GMP biosynthesis; GMP from XMP (L-Gln route): step 1/1. Catalyzes the synthesis of GMP from XMP. This is GMP synthase [glutamine-hydrolyzing] from Heliobacterium modesticaldum (strain ATCC 51547 / Ice1).